The sequence spans 144 residues: Large ribosomal subunit protein uL13 (144 aa).

The protein belongs to the universal ribosomal protein uL13 family. In terms of assembly, part of the 50S ribosomal subunit.

Its function is as follows. This protein is one of the early assembly proteins of the 50S ribosomal subunit, although it is not seen to bind rRNA by itself. It is important during the early stages of 50S assembly. The polypeptide is Large ribosomal subunit protein uL13 (Mesomycoplasma hyopneumoniae (strain 7448) (Mycoplasma hyopneumoniae)).